Here is a 363-residue protein sequence, read N- to C-terminus: Glutamate 5-kinase (363 aa).

ATP is bound at residue Lys-3. Residues Ser-43, Asp-128, and Asn-140 each coordinate substrate. Residues 160–161 (TD) and 202–208 (TGGMRTK) contribute to the ATP site. Residues 267–349 (AGAILIDDGA…REIENVLGYS (83 aa)) form the PUA domain.

The protein belongs to the glutamate 5-kinase family.

The protein localises to the cytoplasm. It carries out the reaction L-glutamate + ATP = L-glutamyl 5-phosphate + ADP. Its pathway is amino-acid biosynthesis; L-proline biosynthesis; L-glutamate 5-semialdehyde from L-glutamate: step 1/2. Catalyzes the transfer of a phosphate group to glutamate to form L-glutamate 5-phosphate. In Xanthomonas axonopodis pv. citri (strain 306), this protein is Glutamate 5-kinase.